Consider the following 123-residue polypeptide: Highly acidic elicitin 20 (123 aa).

The N-terminal stretch at 1–20 is a signal peptide; sequence MQFTALFAATAVALVGSVSA. 3 disulfide bridges follow: Cys-23–Cys-91, Cys-47–Cys-76, and Cys-71–Cys-115.

The protein belongs to the elicitin family.

Its subcellular location is the secreted. Induces local and distal defense responses (incompatible hypersensitive reaction) in plants from the solanaceae and cruciferae families. Elicits leaf necrosis and causes the accumulation of pathogenesis-related proteins. Might interact with the lipidic molecules of the plasma membrane. The sequence is that of Highly acidic elicitin 20 (B20) from Phytophthora cryptogea.